Consider the following 168-residue polypeptide: Skp-like protein (168 aa).

Residues 1-22 (MRKFTQFVLITAAIMAAPSAFA) form the signal peptide.

Belongs to the Skp family.

This chain is Skp-like protein, found in Pseudomonas aeruginosa (strain ATCC 15692 / DSM 22644 / CIP 104116 / JCM 14847 / LMG 12228 / 1C / PRS 101 / PAO1).